Consider the following 593-residue polypeptide: Chromosomal replication initiator protein DnaA (593 aa).

Residues 1–71 (MSDPCWEQCV…EIISNSDAGP (71 aa)) are domain I, interacts with DnaA modulators. Positions 71–256 (PKSLEIAVAQ…DVEGGIQHKH (186 aa)) are domain II. Positions 97–186 (AVPVPDPLPS…STESSADRER (90 aa)) are disordered. Residues 113–124 (SFQPPKGNTSAD) are compositionally biased toward polar residues. The segment at 257–473 (NLNTTFIFDN…GALKRVIANA (217 aa)) is domain III, AAA+ region. The ATP site is built by Gly301, Gly303, Lys304, and Thr305. The segment at 474-593 (QFTQRSISVE…VKNLLRTLTT (120 aa)) is domain IV, binds dsDNA.

Belongs to the DnaA family. As to quaternary structure, oligomerizes as a right-handed, spiral filament on DNA at oriC.

It is found in the cytoplasm. Functionally, plays an essential role in the initiation and regulation of chromosomal replication. ATP-DnaA binds to the origin of replication (oriC) to initiate formation of the DNA replication initiation complex once per cell cycle. Binds the DnaA box (a 9 base pair repeat at the origin) and separates the double-stranded (ds)DNA. Forms a right-handed helical filament on oriC DNA; dsDNA binds to the exterior of the filament while single-stranded (ss)DNA is stabiized in the filament's interior. The ATP-DnaA-oriC complex binds and stabilizes one strand of the AT-rich DNA unwinding element (DUE), permitting loading of DNA polymerase. After initiation quickly degrades to an ADP-DnaA complex that is not apt for DNA replication. Binds acidic phospholipids. This Teredinibacter turnerae (strain ATCC 39867 / T7901) protein is Chromosomal replication initiator protein DnaA.